Here is a 216-residue protein sequence, read N- to C-terminus: UDP-N-acetylbacillosamine N-acetyltransferase (216 aa).

Catalysis depends on histidine 137, which acts as the Proton acceptor. Histidine 146 serves as a coordination point for acetyl-CoA.

This sequence belongs to the transferase hexapeptide repeat family. Forms oligomers.

The enzyme catalyses UDP-N-acetylbacillosamine + acetyl-CoA = UDP-N,N'-diacetylbacillosamine + CoA + H(+). In terms of biological role, catalyzes the conversion of UDP-2,4,6-trideoxy-2-acetamido-4-amino glucose to UDP-2,4,6-trideoxy-2,4-diacetamido glucose, commonly known as UDP-N,N'-diacetylbacillosamine (UDP-diNAcBac). The sequence is that of UDP-N-acetylbacillosamine N-acetyltransferase from Bacillus subtilis (strain 168).